The sequence spans 705 residues: Polyribonucleotide nucleotidyltransferase (705 aa).

Residues Asp-486 and Asp-492 each contribute to the Mg(2+) site. One can recognise a KH domain in the interval 553–612 (PRIHTMKVSQDKIRDIIGKGGATIRQLTEETGTTIEIEDDGTVKIAATSGEQAEDAINRI). The 69-residue stretch at 622–690 (GTLYTGKVVR…RQGRVRLSIK (69 aa)) folds into the S1 motif domain.

Belongs to the polyribonucleotide nucleotidyltransferase family. In terms of assembly, component of the RNA degradosome, which is a multiprotein complex involved in RNA processing and mRNA degradation. Mg(2+) serves as cofactor.

It localises to the cytoplasm. The enzyme catalyses RNA(n+1) + phosphate = RNA(n) + a ribonucleoside 5'-diphosphate. Its function is as follows. Involved in mRNA degradation. Catalyzes the phosphorolysis of single-stranded polyribonucleotides processively in the 3'- to 5'-direction. This Colwellia psychrerythraea (strain 34H / ATCC BAA-681) (Vibrio psychroerythus) protein is Polyribonucleotide nucleotidyltransferase.